The following is a 282-amino-acid chain: MTAAADLYCVMGNPIAHSRSPWIHARFAQLTGQSLHYERRLVPLDGFAQALQSFAAEGGRGCNITVPFKLEAAQLATTRSERVQLAGAANTLVFDGGSIHADNTDGLGLVADITQGAGVPLAGRDVLLVGAGGAAAGVLGPLLRQHPRRIAVVNRTPARAQALVDSHAALAALQKTELLALDMQAPGADFDVIINATASSLEGGPVPVPASVLRPGSLAYDMMYGPAAQPFLDWATGHGATARDGLGMLVEQAAEAFLLWRGVRPPSAPVLQELRAAIAAGA.

Shikimate contacts are provided by residues 18 to 20 (SRS) and threonine 65. Lysine 69 acts as the Proton acceptor in catalysis. Residue glutamate 81 coordinates NADP(+). Asparagine 90 and aspartate 105 together coordinate shikimate. Residues 130–134 (GAGGA), 154–159 (NRTPAR), and methionine 222 each bind NADP(+). Position 224 (tyrosine 224) interacts with shikimate. An NADP(+)-binding site is contributed by glycine 245.

It belongs to the shikimate dehydrogenase family. Homodimer.

The catalysed reaction is shikimate + NADP(+) = 3-dehydroshikimate + NADPH + H(+). It participates in metabolic intermediate biosynthesis; chorismate biosynthesis; chorismate from D-erythrose 4-phosphate and phosphoenolpyruvate: step 4/7. Its function is as follows. Involved in the biosynthesis of the chorismate, which leads to the biosynthesis of aromatic amino acids. Catalyzes the reversible NADPH linked reduction of 3-dehydroshikimate (DHSA) to yield shikimate (SA). The sequence is that of Shikimate dehydrogenase (NADP(+)) from Acidovorax sp. (strain JS42).